A 178-amino-acid chain; its full sequence is Probable chorismate pyruvate-lyase (178 aa).

3 residues coordinate substrate: Arg67, Leu105, and Glu164.

Belongs to the UbiC family.

The protein resides in the cytoplasm. The catalysed reaction is chorismate = 4-hydroxybenzoate + pyruvate. Its pathway is cofactor biosynthesis; ubiquinone biosynthesis. Functionally, removes the pyruvyl group from chorismate, with concomitant aromatization of the ring, to provide 4-hydroxybenzoate (4HB) for the ubiquinone pathway. The sequence is that of Probable chorismate pyruvate-lyase from Methylobacillus flagellatus (strain ATCC 51484 / DSM 6875 / VKM B-1610 / KT).